Here is a 310-residue protein sequence, read N- to C-terminus: Tetrahydromethanopterin S-methyltransferase subunit H (310 aa).

This sequence belongs to the MtrH family. In terms of assembly, the complex is composed of 8 subunits; MtrA, MtrB, MtrC, MtrD, MtrE, MtrF, MtrG and MtrH.

It carries out the reaction 5-methyl-5,6,7,8-tetrahydromethanopterin + coenzyme M + 2 Na(+)(in) = 5,6,7,8-tetrahydromethanopterin + methyl-coenzyme M + 2 Na(+)(out). Its pathway is one-carbon metabolism; methanogenesis from CO(2); methyl-coenzyme M from 5,10-methylene-5,6,7,8-tetrahydromethanopterin: step 2/2. Part of a complex that catalyzes the formation of methyl-coenzyme M and tetrahydromethanopterin from coenzyme M and methyl-tetrahydromethanopterin. This is an energy-conserving, sodium-ion translocating step. MtrH catalyzes the transfer of the methyl group from methyl-tetrahydromethanopterin to the corrinoid prosthetic group of MtrA. The protein is Tetrahydromethanopterin S-methyltransferase subunit H of Methanothermobacter thermautotrophicus (strain ATCC 29096 / DSM 1053 / JCM 10044 / NBRC 100330 / Delta H) (Methanobacterium thermoautotrophicum).